Reading from the N-terminus, the 256-residue chain is Thiazole synthase (256 aa).

Residue K97 is the Schiff-base intermediate with DXP of the active site. 1-deoxy-D-xylulose 5-phosphate-binding positions include G158, 184–185 (AG), and 206–207 (NT).

This sequence belongs to the ThiG family. In terms of assembly, homotetramer. Forms heterodimers with either ThiH or ThiS.

It is found in the cytoplasm. It catalyses the reaction [ThiS sulfur-carrier protein]-C-terminal-Gly-aminoethanethioate + 2-iminoacetate + 1-deoxy-D-xylulose 5-phosphate = [ThiS sulfur-carrier protein]-C-terminal Gly-Gly + 2-[(2R,5Z)-2-carboxy-4-methylthiazol-5(2H)-ylidene]ethyl phosphate + 2 H2O + H(+). Its pathway is cofactor biosynthesis; thiamine diphosphate biosynthesis. Catalyzes the rearrangement of 1-deoxy-D-xylulose 5-phosphate (DXP) to produce the thiazole phosphate moiety of thiamine. Sulfur is provided by the thiocarboxylate moiety of the carrier protein ThiS. In vitro, sulfur can be provided by H(2)S. In Flavobacterium psychrophilum (strain ATCC 49511 / DSM 21280 / CIP 103535 / JIP02/86), this protein is Thiazole synthase.